We begin with the raw amino-acid sequence, 156 residues long: Small ribosomal subunit protein uS7 (156 aa).

It belongs to the universal ribosomal protein uS7 family. In terms of assembly, part of the 30S ribosomal subunit. Contacts proteins S9 and S11.

In terms of biological role, one of the primary rRNA binding proteins, it binds directly to 16S rRNA where it nucleates assembly of the head domain of the 30S subunit. Is located at the subunit interface close to the decoding center, probably blocks exit of the E-site tRNA. The sequence is that of Small ribosomal subunit protein uS7 from Rhodopseudomonas palustris (strain BisB18).